The following is a 349-amino-acid chain: Transmembrane protein 255A (349 aa).

4 helical membrane passes run 30–50 (IYVT…GLAA), 57–77 (VTVG…LGII), 89–109 (LVAS…CAIV), and 226–246 (TILN…LGGF). A disordered region spans residues 303-329 (PSSPPSGLSDEPQSASPSPSYMWSSSA). Positions 316 to 329 (SASPSPSYMWSSSA) are enriched in low complexity.

This sequence belongs to the TMEM255 family.

Its subcellular location is the membrane. The sequence is that of Transmembrane protein 255A (TMEM255A) from Homo sapiens (Human).